An 818-amino-acid polypeptide reads, in one-letter code: Protein LDB19 (818 aa).

The disordered stretch occupies residues 1 to 25; sequence MAFSRLTSTHQSNHNGYSNSNKKGQ. Thr-93 is modified (phosphothreonine). The span at 352–361 shows a compositional bias: basic and acidic residues; sequence QVKIKESEKS. Residues 352–374 are disordered; that stretch reads QVKIKESEKSKKPRSHIKRYGEL. Ser-384 bears the Phosphoserine mark. A disordered region spans residues 388–436; sequence MPSQRLPGEPGREQAPNSSGPASTGNVGLDDENPVNEDEEDQPGSEFIH. Polar residues predominate over residues 402–413; it reads APNSSGPASTGN. Residues 416–430 show a composition bias toward acidic residues; sequence LDDENPVNEDEEDQP. Lys-486 is covalently cross-linked (Glycyl lysine isopeptide (Lys-Gly) (interchain with G-Cter in ubiquitin)). Disordered stretches follow at residues 568 to 590 and 607 to 644; these read QPIRKPNSKNKKETNNNTMNVHN and TPKVRRMGPEDITPVNSNKSNHSTNKEKASNGASNSNI. Thr-619 carries the post-translational modification Phosphothreonine. Polar residues predominate over residues 620 to 629; sequence PVNSNKSNHS. Ser-808 carries the phosphoserine modification.

This sequence belongs to the LDB19 family.

The protein localises to the cytoplasm. Its subcellular location is the golgi apparatus. Functionally, may be involved in protein-linked oligosaccharide phosphorylation since the deletion reduces the negative charge of the cell surface. Involved in the resistance to EDTA, cadmium chloride, cycloheximide, 6-dimethylaminopurine, methyl caffeate, beta-chloro-L-alanine, caffeine and cerulenin. The chain is Protein LDB19 (LDB19) from Saccharomyces cerevisiae (strain ATCC 204508 / S288c) (Baker's yeast).